A 28-amino-acid polypeptide reads, in one-letter code: Phospholipase A2 2 (28 aa).

It belongs to the phospholipase A2 family. Group I subfamily. The cofactor is Ca(2+). In terms of tissue distribution, expressed by the venom gland.

Its subcellular location is the secreted. It carries out the reaction a 1,2-diacyl-sn-glycero-3-phosphocholine + H2O = a 1-acyl-sn-glycero-3-phosphocholine + a fatty acid + H(+). In terms of biological role, snake venom phospholipase A2 (PLA2) that inhibits neuromuscular transmission by blocking acetylcholine release from the nerve termini. PLA2 catalyzes the calcium-dependent hydrolysis of the 2-acyl groups in 3-sn-phosphoglycerides. The sequence is that of Phospholipase A2 2 from Micrurus nigrocinctus (Central American coral snake).